A 754-amino-acid polypeptide reads, in one-letter code: Phosphoribosylformylglycinamidine synthase subunit PurL (754 aa).

Residue histidine 52 is part of the active site. 2 residues coordinate ATP: tyrosine 55 and lysine 95. Glutamate 97 lines the Mg(2+) pocket. Residues 98–101 and arginine 120 contribute to the substrate site; that span reads SHNH. Histidine 99 acts as the Proton acceptor in catalysis. Aspartate 121 is a binding site for Mg(2+). Glutamine 244 is a substrate binding site. Mg(2+) is bound at residue aspartate 272. Position 316–318 (316–318) interacts with substrate; that stretch reads ESQ. Positions 504 and 541 each coordinate ATP. Position 542 (asparagine 542) interacts with Mg(2+). Substrate is bound at residue serine 544.

The protein belongs to the FGAMS family. In terms of assembly, monomer. Part of the FGAM synthase complex composed of 1 PurL, 1 PurQ and 2 PurS subunits.

The protein resides in the cytoplasm. The catalysed reaction is N(2)-formyl-N(1)-(5-phospho-beta-D-ribosyl)glycinamide + L-glutamine + ATP + H2O = 2-formamido-N(1)-(5-O-phospho-beta-D-ribosyl)acetamidine + L-glutamate + ADP + phosphate + H(+). It functions in the pathway purine metabolism; IMP biosynthesis via de novo pathway; 5-amino-1-(5-phospho-D-ribosyl)imidazole from N(2)-formyl-N(1)-(5-phospho-D-ribosyl)glycinamide: step 1/2. In terms of biological role, part of the phosphoribosylformylglycinamidine synthase complex involved in the purines biosynthetic pathway. Catalyzes the ATP-dependent conversion of formylglycinamide ribonucleotide (FGAR) and glutamine to yield formylglycinamidine ribonucleotide (FGAM) and glutamate. The FGAM synthase complex is composed of three subunits. PurQ produces an ammonia molecule by converting glutamine to glutamate. PurL transfers the ammonia molecule to FGAR to form FGAM in an ATP-dependent manner. PurS interacts with PurQ and PurL and is thought to assist in the transfer of the ammonia molecule from PurQ to PurL. This chain is Phosphoribosylformylglycinamidine synthase subunit PurL, found in Salinibacter ruber (strain DSM 13855 / M31).